Consider the following 525-residue polypeptide: Acyl-lipid (9-3)-desaturase (525 aa).

A Cytochrome b5 heme-binding domain is found at 102–176 (KSTHPLSEVA…LQDFYIGDVE (75 aa)). Residues histidine 137 and histidine 159 each contribute to the heme site. The helical transmembrane segment at 216 to 236 (VAIFAASIAIICWSKTISAVL) threads the bilayer. The short motif at 254–258 (HDFLH) is the Histidine box-1 element. Residues 266 to 286 (WLNEVVGYVIGNAVLGFSTGW) traverse the membrane as a helical segment. The short motif at 291–295 (HNLHH) is the Histidine box-2 element. Transmembrane regions (helical) follow at residues 340-360 (QHLFFMGLLFFARGSWLFWSW), 378-398 (GTVLFHYFWFVGTACYLLPGW), and 401-421 (LVWMAVTELMSGMLLGFVFVL). The Histidine box-3 signature appears at 462-466 (QIEHH).

It belongs to the fatty acid desaturase type 1 family.

It is found in the membrane. The enzyme catalyses (9Z,12Z,15Z)-octadecatrienoyl-containing glycerolipid + 2 Fe(II)-[cytochrome b5] + O2 + 2 H(+) = (6Z,9Z,12Z,15Z)-octadecatetraenoyl-containing glycerolipid + 2 Fe(III)-[cytochrome b5] + 2 H2O. It carries out the reaction a (9Z,12Z)-octadecadienoyl-containing glycerolipid + 2 Fe(II)-[cytochrome b5] + O2 + 2 H(+) = (6Z,9Z,12Z)-octadecatrienoyl-containing glycerolipid + 2 Fe(III)-[cytochrome b5] + 2 H2O. The protein operates within lipid metabolism; polyunsaturated fatty acid biosynthesis. Fatty acid desaturase able to introduce a delta(6)-double bond into delta(9)-unsaturated fatty-acid substrates. Can use both linoleic acid (18:2(9Z,12Z)) and alpha-linolenic acid (18:3(9Z,12Z,15Z)) as substrates. Required for the biosynthesis of arachidonic acid (20:4(5z,8Z,11Z,14Z)). This chain is Acyl-lipid (9-3)-desaturase, found in Physcomitrium patens (Spreading-leaved earth moss).